The chain runs to 394 residues: Alanine racemase 2 (394 aa).

The active-site Proton acceptor; specific for D-alanine is Lys-39. At Lys-39 the chain carries N6-(pyridoxal phosphate)lysine. Position 139 (Arg-139) interacts with substrate. Catalysis depends on Tyr-272, which acts as the Proton acceptor; specific for L-alanine. Position 320 (Met-320) interacts with substrate.

This sequence belongs to the alanine racemase family. Pyridoxal 5'-phosphate serves as cofactor.

It carries out the reaction L-alanine = D-alanine. It functions in the pathway amino-acid biosynthesis; D-alanine biosynthesis; D-alanine from L-alanine: step 1/1. Its function is as follows. Catalyzes the interconversion of L-alanine and D-alanine. May also act on other amino acids. The protein is Alanine racemase 2 (alr2) of Bacillus subtilis (strain 168).